The following is an 88-amino-acid chain: Small ribosomal subunit protein uS15 (88 aa).

The protein belongs to the universal ribosomal protein uS15 family. Part of the 30S ribosomal subunit. Forms a bridge to the 50S subunit in the 70S ribosome, contacting the 23S rRNA.

Its function is as follows. One of the primary rRNA binding proteins, it binds directly to 16S rRNA where it helps nucleate assembly of the platform of the 30S subunit by binding and bridging several RNA helices of the 16S rRNA. Forms an intersubunit bridge (bridge B4) with the 23S rRNA of the 50S subunit in the ribosome. The polypeptide is Small ribosomal subunit protein uS15 (Polaromonas naphthalenivorans (strain CJ2)).